A 229-amino-acid polypeptide reads, in one-letter code: Peptidase E (229 aa).

Residues S120, D135, and H157 each act as charge relay system in the active site.

The protein belongs to the peptidase S51 family.

It localises to the cytoplasm. The catalysed reaction is Dipeptidase E catalyzes the hydrolysis of dipeptides Asp-|-Xaa. It does not act on peptides with N-terminal Glu, Asn or Gln, nor does it cleave isoaspartyl peptides.. In terms of biological role, hydrolyzes dipeptides containing N-terminal aspartate residues. May play a role in allowing the cell to use peptide aspartate to spare carbon otherwise required for the synthesis of the aspartate family of amino acids. This chain is Peptidase E, found in Salmonella arizonae (strain ATCC BAA-731 / CDC346-86 / RSK2980).